The primary structure comprises 59 residues: Large ribosomal subunit protein bL32 (59 aa).

The tract at residues 35-59 (EAHLRHHISPNGYYRGRKVVKTKND) is disordered. Over residues 49-59 (RGRKVVKTKND) the composition is skewed to basic residues.

This sequence belongs to the bacterial ribosomal protein bL32 family.

This Polynucleobacter asymbioticus (strain DSM 18221 / CIP 109841 / QLW-P1DMWA-1) (Polynucleobacter necessarius subsp. asymbioticus) protein is Large ribosomal subunit protein bL32.